A 278-amino-acid chain; its full sequence is Keratin-associated protein 5-1 (278 aa).

8 tandem repeats follow at residues 42–45, 48–51, 130–133, 136–139, 142–145, 239–242, 258–261, and 268–271. The 8 X 4 AA repeats of C-C-X-P stretch occupies residues 42 to 271; it reads CCVPVCCCKP…CCSQSSCCVP (230 aa).

The protein belongs to the KRTAP type 5 family. As to quaternary structure, interacts with hair keratins. In terms of tissue distribution, expressed in hair root but not in skin. Expressed also in lung, pancreas, ovary, testis.

In terms of biological role, in the hair cortex, hair keratin intermediate filaments are embedded in an interfilamentous matrix, consisting of hair keratin-associated protein (KRTAP), which are essential for the formation of a rigid and resistant hair shaft through their extensive disulfide bond cross-linking with abundant cysteine residues of hair keratins. The matrix proteins include the high-sulfur and high-glycine-tyrosine keratins. The sequence is that of Keratin-associated protein 5-1 (KRTAP5-1) from Homo sapiens (Human).